The following is a 331-amino-acid chain: ATPase GET3 (331 aa).

32-39 lines the ATP pocket; that stretch reads KGGVGKTT. Residue Asp-61 is part of the active site. Residues Glu-235 and Asn-262 each coordinate ATP. The Zn(2+) site is built by Cys-273 and Cys-276.

This sequence belongs to the arsA ATPase family. As to quaternary structure, homodimer.

The protein localises to the cytoplasm. It is found in the endoplasmic reticulum. In terms of biological role, ATPase required for the post-translational delivery of tail-anchored (TA) proteins to the endoplasmic reticulum. Recognizes and selectively binds the transmembrane domain of TA proteins in the cytosol. This complex then targets to the endoplasmic reticulum by membrane-bound receptors, where the tail-anchored protein is released for insertion. This process is regulated by ATP binding and hydrolysis. ATP binding drives the homodimer towards the closed dimer state, facilitating recognition of newly synthesized TA membrane proteins. ATP hydrolysis is required for insertion. Subsequently, the homodimer reverts towards the open dimer state, lowering its affinity for the membrane-bound receptor, and returning it to the cytosol to initiate a new round of targeting. The sequence is that of ATPase GET3 from Malassezia globosa (strain ATCC MYA-4612 / CBS 7966) (Dandruff-associated fungus).